A 259-amino-acid polypeptide reads, in one-letter code: Ras-related protein Rab-34 (259 aa).

M1 is subject to N-acetylmethionine. 8 residues coordinate GTP: S62, V63, G64, K65, T66, D78, Y81, and T84. T66 lines the Mg(2+) pocket. The Switch 1 motif lies at R71 to F89. Residues T84 and D107 each contribute to the Mg(2+) site. A Switch 2 motif is present at residues T108–A127. 4 residues coordinate GTP: G110, K167, D169, and S198. Phosphoserine occurs at positions 241 and 244. 2 S-geranylgeranyl cysteine lipidation sites follow: C257 and C258.

Belongs to the small GTPase superfamily. Rab family. In terms of assembly, interacts with RILP. The GTP-bound form interacts with REP15. The cofactor is Mg(2+).

The protein resides in the cytoplasm. It localises to the golgi apparatus. The protein localises to the cytoplasmic vesicle. It is found in the phagosome. Its subcellular location is the phagosome membrane. The protein resides in the cell projection. It localises to the cilium. The protein localises to the cytoskeleton. It is found in the microtubule organizing center. Its subcellular location is the centrosome. The protein resides in the centriole. It carries out the reaction GTP + H2O = GDP + phosphate + H(+). With respect to regulation, regulated by guanine nucleotide exchange factors (GEFs) which promote the exchange of bound GDP for free GTP. Regulated by GTPase activating proteins (GAPs) which increase the GTP hydrolysis activity. Inhibited by GDP dissociation inhibitors (GDIs). The small GTPases Rab are key regulators of intracellular membrane trafficking, from the formation of transport vesicles to their fusion with membranes. Rabs cycle between an inactive GDP-bound form and an active GTP-bound form that is able to recruit to membranes different sets of downstream effectors directly responsible for vesicle formation, movement, tethering and fusion. RAB34 transports protein involved in the redistribution of lysosomes to the peri-Golgi region. Plays a role in the maturation of phagosomes that engulf pathogens, such as S.aureus and M.tuberculosis. Plays a role in the fusion of phagosomes with lysosomes. Required for the early steps of intracellular ciliogenesis, the cilium assembly pathway initiated by trafficking and docking of ciliary vesicles to the centrioles in the cytoplasm, followed by axoneme formation in the cytoplasm. After axoneme elongation, the centrioles migrate close to the cell surface so that ciliary vesicles can fuse with the plasma membrane to expose cilia to the extracellular space. It seems dispensable for ciliogenesis via the extracellular pathway where cilium assembly begins after migration and docking of the centriole to the plasma membrane. Also acts as a positive regulator of hedgehog signaling and regulates ciliary function. This Sus scrofa (Pig) protein is Ras-related protein Rab-34 (RAB34).